Reading from the N-terminus, the 130-residue chain is Large ribosomal subunit protein bL12 (130 aa).

This sequence belongs to the bacterial ribosomal protein bL12 family. In terms of assembly, homodimer. Part of the ribosomal stalk of the 50S ribosomal subunit. Forms a multimeric L10(L12)X complex, where L10 forms an elongated spine to which 2 to 4 L12 dimers bind in a sequential fashion. Binds GTP-bound translation factors.

Forms part of the ribosomal stalk which helps the ribosome interact with GTP-bound translation factors. Is thus essential for accurate translation. This is Large ribosomal subunit protein bL12 from Yersinia pestis bv. Antiqua (strain Angola).